A 354-amino-acid polypeptide reads, in one-letter code: Threonine synthase (354 aa).

Residue Lys61 is modified to N6-(pyridoxal phosphate)lysine. Pyridoxal 5'-phosphate is bound by residues Asn87, 187–191, and Thr316; that span reads GNAGN.

It belongs to the threonine synthase family. Pyridoxal 5'-phosphate serves as cofactor.

It carries out the reaction O-phospho-L-homoserine + H2O = L-threonine + phosphate. Its pathway is amino-acid biosynthesis; L-threonine biosynthesis; L-threonine from L-aspartate: step 5/5. Catalyzes the gamma-elimination of phosphate from L-phosphohomoserine and the beta-addition of water to produce L-threonine. This is Threonine synthase (thrC) from Halalkalibacterium halodurans (strain ATCC BAA-125 / DSM 18197 / FERM 7344 / JCM 9153 / C-125) (Bacillus halodurans).